We begin with the raw amino-acid sequence, 349 residues long: uncharacterized protein (349 aa).

An N-terminal signal peptide occupies residues 1–16 (MLFKISFLALIASALA). The Lumenal portion of the chain corresponds to 17-326 (MSINSPTNGD…SSSSSSSAAS (310 aa)). 2 disordered regions span residues 115–190 (ASSS…SSYR) and 243–322 (TNGT…SSSS). Composition is skewed to low complexity over residues 116 to 176 (SSSS…SSRT), 243 to 278 (TNGT…TASG), and 289 to 322 (STND…SSSS). A helical membrane pass occupies residues 327-347 (LVSQPVGISAVIAFFAVALSL). The Cytoplasmic portion of the chain corresponds to 348–349 (TL).

It localises to the endoplasmic reticulum membrane. This is an uncharacterized protein from Schizosaccharomyces pombe (strain 972 / ATCC 24843) (Fission yeast).